The chain runs to 436 residues: Bystin (436 aa).

Residues 1–105 (MPKLKVTRGA…GSDEEDEEWP (105 aa)) are disordered. The residue at position 54 (S54) is a Phosphoserine. The segment covering 70–86 (TEHATGDRPAKPRERAT) has biased composition (basic and acidic residues). A compositionally biased stretch (acidic residues) spans 96–105 (GSDEEDEEWP). Residue S97 is modified to Phosphoserine. T155 is modified (phosphothreonine). Phosphoserine is present on residues S166 and S413.

The protein belongs to the bystin family. As to quaternary structure, binds trophinin, tastin and cytokeratins.

It is found in the cytoplasm. The protein localises to the nucleus. The protein resides in the nucleolus. Functionally, required for processing of 20S pre-rRNA precursor and biogenesis of 40S ribosomal subunits. This chain is Bystin, found in Rattus norvegicus (Rat).